Consider the following 443-residue polypeptide: Probable D-serine dehydratase (443 aa).

Lys116 bears the N6-(pyridoxal phosphate)lysine mark.

The protein belongs to the serine/threonine dehydratase family. DsdA subfamily. The cofactor is pyridoxal 5'-phosphate.

The enzyme catalyses D-serine = pyruvate + NH4(+). This Bacillus cereus (strain AH187) protein is Probable D-serine dehydratase.